We begin with the raw amino-acid sequence, 286 residues long: UPF0761 membrane protein KPN78578_41360 (286 aa).

Transmembrane regions (helical) follow at residues 44–64, 74–94, 104–124, 140–160, 183–203, 210–230, and 244–264; these read LLSL…FPMF, FIFA…IEQF, VGAF…DSAL, FAVY…SLAI, LFPL…VPTT, AVIG…AFAL, and VISV…IVLL.

The protein belongs to the UPF0761 family.

It is found in the cell inner membrane. This chain is UPF0761 membrane protein KPN78578_41360, found in Klebsiella pneumoniae subsp. pneumoniae (strain ATCC 700721 / MGH 78578).